We begin with the raw amino-acid sequence, 443 residues long: F-box/LRR-repeat protein At2g42720 (443 aa).

Residues 1-47 (MDRISSLPDEILEHILSFLSTKEAALTSSLSTRWKNVFVFVPSLHLD) form the F-box domain. LRR repeat units follow at residues 139 to 167 (KLRL…CLDT), 169 to 194 (DFDG…VLED), 201 to 236 (CGSV…ELSC), 271 to 296 (SSHL…HLTS), 323 to 348 (DKKQ…VFKG), and 363 to 389 (CSGI…SYQG).

The sequence is that of F-box/LRR-repeat protein At2g42720 from Arabidopsis thaliana (Mouse-ear cress).